The following is a 368-amino-acid chain: tRNA(Met) cytidine acetate ligase (368 aa).

ATP contacts are provided by residues 7–20, G96, N152, and R175; that span reads IAEFNPFHNGHKYL.

This sequence belongs to the TmcAL family.

The protein localises to the cytoplasm. The enzyme catalyses cytidine(34) in elongator tRNA(Met) + acetate + ATP = N(4)-acetylcytidine(34) in elongator tRNA(Met) + AMP + diphosphate. Functionally, catalyzes the formation of N(4)-acetylcytidine (ac(4)C) at the wobble position of elongator tRNA(Met), using acetate and ATP as substrates. First activates an acetate ion to form acetyladenylate (Ac-AMP) and then transfers the acetyl group to tRNA to form ac(4)C34. The sequence is that of tRNA(Met) cytidine acetate ligase from Streptococcus pyogenes serotype M28 (strain MGAS6180).